We begin with the raw amino-acid sequence, 288 residues long: T-lymphocyte activation antigen CD80 (288 aa).

The N-terminal stretch at 1–34 (MGHTRRQGTSPSKCPYLNFFQLLVLAGLSHFCSG) is a signal peptide. The Ig-like V-type domain occupies 35–135 (VIHVTKEVKE…FKREHLAEVT (101 aa)). Residues 35 to 242 (VIHVTKEVKE…TTKQEHFPDN (208 aa)) are Extracellular-facing. Intrachain disulfides connect C50/C116 and C162/C216. N-linked (GlcNAc...) asparagine glycosylation is found at N53, N89, N98, N186, N207, N211, N226, and N232. Residues 145–230 (PSISDFEIPT…GHLRVNQTFN (86 aa)) enclose the Ig-like C2-type domain. The chain crosses the membrane as a helical span at residues 243–263 (LLPSWAITLISVNGIFVICCL). 4 S-palmitoyl cysteine lipidation sites follow: C261, C262, C266, and C271. Over 264-288 (TYCFAPRCRERRRNERLRRESVRPV) the chain is Cytoplasmic. S284 is modified (phosphoserine).

Homodimer. Interacts with CTLA4; this interaction inhibits T-cell activation. Interacts with PDL1/CD274; this interaction blocks PDL1/PDCD1 binding and thus PDL1/CD274 inhibitory function. Interacts with CD28. As to quaternary structure, (Microbial infection) Interacts with adenovirus subgroup B fiber proteins. In terms of assembly, (Microbial infection) Interacts with Orthopoxvirus OPG038/M2 protein, inhibiting the interaction with CTLA4/CD152. Post-translationally, palmitoylated by ZDHHC20; palmitoylation protects CD80 from ubiquitin-mediated degradation, regulating the protein stability, and ensures its accurate plasma membrane localization. As to expression, expressed on activated B-cells, macrophages and dendritic cells.

The protein localises to the cell membrane. Functionally, costimulatory molecule that belongs to the immunoglobulin superfamily that plays an important role in T-lymphocyte activation. Acts as the primary auxiliary signal augmenting the MHC/TCR signal in naive T-cells together with the CD28 receptor which is constitutively expressed on the cell surface of T-cells. In turn, activates different signaling pathways such as NF-kappa-B or MAPK leading to the production of different cytokines. In addition, CD28/CD80 costimulatory signal stimulates glucose metabolism and ATP synthesis of T-cells by activating the PI3K/Akt signaling pathway. Also acts as a regulator of PDL1/PDCD1 interactions to limit excess engagement of PDL1 and its inhibitory role in immune responses. Expressed on B-cells, plays a critical role in regulating interactions between B-cells and T-cells in both early and late germinal center responses, which are crucial for the generation of effective humoral immune responses. In terms of biological role, (Microbial infection) Acts as a receptor for adenovirus subgroup B. The protein is T-lymphocyte activation antigen CD80 (CD80) of Homo sapiens (Human).